A 1396-amino-acid polypeptide reads, in one-letter code: DNA-directed RNA polymerase subunit beta' (1396 aa).

Residues cysteine 72, cysteine 74, cysteine 87, and cysteine 90 each contribute to the Zn(2+) site. Mg(2+)-binding residues include aspartate 463, aspartate 465, and aspartate 467. Cysteine 814, cysteine 889, cysteine 896, and cysteine 899 together coordinate Zn(2+).

The protein belongs to the RNA polymerase beta' chain family. In terms of assembly, the RNAP catalytic core consists of 2 alpha, 1 beta, 1 beta' and 1 omega subunit. When a sigma factor is associated with the core the holoenzyme is formed, which can initiate transcription. It depends on Mg(2+) as a cofactor. Zn(2+) is required as a cofactor.

The enzyme catalyses RNA(n) + a ribonucleoside 5'-triphosphate = RNA(n+1) + diphosphate. In terms of biological role, DNA-dependent RNA polymerase catalyzes the transcription of DNA into RNA using the four ribonucleoside triphosphates as substrates. In Chlamydia muridarum (strain MoPn / Nigg), this protein is DNA-directed RNA polymerase subunit beta'.